The following is a 153-amino-acid chain: Deoxyuridine 5'-triphosphate nucleotidohydrolase (153 aa).

Residues 71 to 73 (RSG), Asn84, 88 to 90 (LID), and Met98 contribute to the substrate site.

The protein belongs to the dUTPase family. Mg(2+) is required as a cofactor.

The catalysed reaction is dUTP + H2O = dUMP + diphosphate + H(+). It participates in pyrimidine metabolism; dUMP biosynthesis; dUMP from dCTP (dUTP route): step 2/2. Functionally, this enzyme is involved in nucleotide metabolism: it produces dUMP, the immediate precursor of thymidine nucleotides and it decreases the intracellular concentration of dUTP so that uracil cannot be incorporated into DNA. The chain is Deoxyuridine 5'-triphosphate nucleotidohydrolase from Hydrogenovibrio crunogenus (strain DSM 25203 / XCL-2) (Thiomicrospira crunogena).